The chain runs to 418 residues: Glutamyl-tRNA reductase (418 aa).

Substrate is bound by residues 49 to 52, Ser-109, 114 to 116, and Gln-120; these read TCNR and EPQ. The active-site Nucleophile is the Cys-50. 189-194 contributes to the NADP(+) binding site; that stretch reads GAGETI.

This sequence belongs to the glutamyl-tRNA reductase family. In terms of assembly, homodimer.

The enzyme catalyses (S)-4-amino-5-oxopentanoate + tRNA(Glu) + NADP(+) = L-glutamyl-tRNA(Glu) + NADPH + H(+). The protein operates within porphyrin-containing compound metabolism; protoporphyrin-IX biosynthesis; 5-aminolevulinate from L-glutamyl-tRNA(Glu): step 1/2. In terms of biological role, catalyzes the NADPH-dependent reduction of glutamyl-tRNA(Glu) to glutamate 1-semialdehyde (GSA). This is Glutamyl-tRNA reductase from Escherichia coli O1:K1 / APEC.